The primary structure comprises 830 residues: AdoMet-dependent rRNA methyltransferase SPB1 (830 aa).

5 residues coordinate S-adenosyl-L-methionine: G58, W60, D78, D94, and D119. K159 serves as the catalytic Proton acceptor. Residues 345–388 (LTEEEQIEKELQEMQQKQNLKKKREKRKQNEIKQKEITRMQMQM) are a coiled coil. 2 disordered regions span residues 485-529 (AKEA…SDSD) and 565-642 (EADL…AREV). Acidic residues-rich tracts occupy residues 516–529 (VDDD…SDSD), 591–610 (VSEE…DSDF), and 618–630 (DESD…EDEA). The segment covering 631 to 642 (ERSQKEKHAREV) has biased composition (basic and acidic residues).

Belongs to the class I-like SAM-binding methyltransferase superfamily. RNA methyltransferase RlmE family. SPB1 subfamily. Component of the nucleolar and nucleoplasmic pre-60S ribosomal particle.

It is found in the nucleus. It localises to the nucleolus. It catalyses the reaction a ribonucleotide in rRNA + S-adenosyl-L-methionine = a 2'-O-methylribonucleotide in rRNA + S-adenosyl-L-homocysteine + H(+). Its function is as follows. Required for proper assembly of pre-ribosomal particles during the biogenesis of the 60S ribosomal subunit. The chain is AdoMet-dependent rRNA methyltransferase SPB1 from Eremothecium gossypii (strain ATCC 10895 / CBS 109.51 / FGSC 9923 / NRRL Y-1056) (Yeast).